Here is a 1091-residue protein sequence, read N- to C-terminus: Integrin alpha-6 (1091 aa).

Positions 1–23 (MAVAGQLCLLYLSAGLLARLGTA) are cleaved as a signal peptide. The Extracellular segment spans residues 24–1011 (FNLDTREDNV…FPSKTVAQYS (988 aa)). 7 FG-GAP repeats span residues 30–95 (EDNV…GPCT), 101–166 (NDAD…IEDD), 176–229 (DGRL…FFDM), 244–300 (DHDE…KSAH), 301–363 (LLPE…KWSN), 364–419 (VKPI…GIIT), and 420–479 (KPTQ…VTPN). N-linked (GlcNAc...) asparagine glycosylation is present at asparagine 78. Intrachain disulfides connect cysteine 86–cysteine 94, cysteine 131–cysteine 154, and cysteine 175–cysteine 188. N-linked (GlcNAc...) asparagine glycans are attached at residues asparagine 223 and asparagine 284. Ca(2+) is bound by residues aspartate 324, asparagine 326, aspartate 328, and aspartate 332. An N-linked (GlcNAc...) asparagine glycan is attached at asparagine 370. Positions 386, 388, 390, 392, 394, 441, 443, 445, 447, and 449 each coordinate Ca(2+). 4 cysteine pairs are disulfide-bonded: cysteine 489–cysteine 496, cysteine 502–cysteine 562, cysteine 626–cysteine 632, and cysteine 726–cysteine 737. N-linked (GlcNAc...) asparagine glycans are attached at residues asparagine 731, asparagine 746, and asparagine 927. 2 cysteine pairs are disulfide-bonded: cysteine 881–cysteine 928 and cysteine 934–cysteine 939. N-linked (GlcNAc...) asparagine glycosylation is present at asparagine 958. The chain crosses the membrane as a helical span at residues 1012–1037 (GVAWWIILLAVLAGILMLALLVFLLW). Over 1038–1091 (KCGFFKRSRYDDSIPRYHAVRIRKEEREIKDEKHMDNLEKKQWITKWNENESYS) the chain is Cytoplasmic. Cysteine 1039 is lipidated: S-palmitoyl cysteine; by DHHC3. The GFFKR motif motif lies at 1040-1044 (GFFKR). Arginine 1064 is subject to Phosphoserine.

Belongs to the integrin alpha chain family. As to quaternary structure, heterodimer of an alpha and a beta subunit. The alpha subunit is composed of a heavy and a light chain linked by a disulfide bond. Alpha-6 associates with either beta-1 (ITGB1) or beta-4 (ITGB4) to form ITGA6:ITGB1 and ITGA6:ITGB4, respectively. ITGA6:ITGB1 is found in a complex with CD9; interaction takes place in oocytes and is involved in sperm-egg fusion. ITGA6:ITGB4 is found in a ternary complex with NRG1 and ERBB3. ITGA6:ITGB4 is found in a ternary complex with IGF1 and IGF1R. ITGA6:ITGB4 interacts with IGF2. Interacts with ADAM9. Interacts with RAB21. Interacts with MDK. ITGA6:ITGB1 interacts with MDK; this interaction mediates MDK-induced neurite outgrowth. Interacts with CD82; this interaction down-regulates ITGA6-mediated cell adhesion. In terms of processing, isoforms containing segment A, but not segment B, are the major targets for PMA-induced phosphorylation. Phosphorylation occurs on 'Ser-1064' of isoform alpha-6X1A. Phosphorylation is not required for the induction of integrin alpha-6A/beta-1 high affinity but may reduce the affinity for ligand. Undergoes PLAU-mediated cleavage at residues Arg-595-596-Arg in a time-dependent manner to produce processed integrin alpha-6 (alpha6p). Post-translationally, palmitoylation by DHHC3 enhances stability and cell surface expression. Expressed at low levels in normal skin tissue with elevated levels in skin tumors.

The protein resides in the cell membrane. In terms of biological role, integrin alpha-6/beta-1 (ITGA6:ITGB1) is a receptor for laminin on platelets. Integrin alpha-6/beta-1 (ITGA6:ITGB1) is present in oocytes and is involved in sperm-egg fusion. Integrin alpha-6/beta-4 (ITGA6:ITGB4) is a receptor for laminin in epithelial cells and it plays a critical structural role in the hemidesmosome. ITGA6:ITGB4 binds to NRG1 (via EGF domain) and this binding is essential for NRG1-ERBB signaling. ITGA6:ITGB4 binds to IGF1 and this binding is essential for IGF1 signaling. ITGA6:ITGB4 binds to IGF2 and this binding is essential for IGF2 signaling. This chain is Integrin alpha-6 (Itga6), found in Mus musculus (Mouse).